The chain runs to 508 residues: 3-octaprenyl-4-hydroxybenzoate carboxy-lyase (508 aa).

Residue asparagine 178 participates in Mn(2+) binding. Prenylated FMN is bound by residues 181–183, 195–197, and 200–201; these read IYR, RWL, and RG. Glutamate 244 is a binding site for Mn(2+). Residue aspartate 303 is the Proton donor of the active site.

This sequence belongs to the UbiD family. As to quaternary structure, homohexamer. Prenylated FMN is required as a cofactor. Mn(2+) serves as cofactor.

It is found in the cell membrane. The catalysed reaction is a 4-hydroxy-3-(all-trans-polyprenyl)benzoate + H(+) = a 2-(all-trans-polyprenyl)phenol + CO2. It functions in the pathway cofactor biosynthesis; ubiquinone biosynthesis. Catalyzes the decarboxylation of 3-octaprenyl-4-hydroxy benzoate to 2-octaprenylphenol, an intermediate step in ubiquinone biosynthesis. The polypeptide is 3-octaprenyl-4-hydroxybenzoate carboxy-lyase (Cupriavidus taiwanensis (strain DSM 17343 / BCRC 17206 / CCUG 44338 / CIP 107171 / LMG 19424 / R1) (Ralstonia taiwanensis (strain LMG 19424))).